We begin with the raw amino-acid sequence, 315 residues long: MQINKKEIKQNLKKWNEEKKSIKSFSFTGDIILDNVSYTYSKKTPFEFRALDNADLTISDKKITCVIGTTGSGKSTMIQLTNGLLISETGQTIVGDYKIPAGLKKIKEVKDLRREVGLVFQFPEYQLFQDTIEKDIAFGPIHLGADKEEVYKKIPELLDLVSLPREYAKRSPFELSGGQKRRTAIAGIIAMDGKTLVLDEPTGGLDPKGEEDFMNLFLRLNKNQGKRIIMVTHNMDQVLKVADEVIVMHEGKVISKGSPFEIFSNQELLSKIQIEPPKLYKLMYKLKEKGTDLLNKNIRTIDEFAKAFKEVRKGK.

The 245-residue stretch at 31–275 folds into the ABC transporter domain; the sequence is IILDNVSYTY…QELLSKIQIE (245 aa). 68–75 contacts ATP; sequence GTTGSGKS.

Belongs to the ABC transporter superfamily. Energy-coupling factor EcfA family. Forms a stable energy-coupling factor (ECF) transporter complex composed of 2 membrane-embedded substrate-binding proteins (S component), 2 ATP-binding proteins (A component) and 2 transmembrane proteins (T component).

It localises to the cell membrane. ATP-binding (A) component of a common energy-coupling factor (ECF) ABC-transporter complex. Unlike classic ABC transporters this ECF transporter provides the energy necessary to transport a number of different substrates. The chain is Energy-coupling factor transporter ATP-binding protein EcfA2 from Mesoplasma florum (strain ATCC 33453 / NBRC 100688 / NCTC 11704 / L1) (Acholeplasma florum).